The primary structure comprises 514 residues: Type-2 serine--tRNA ligase (514 aa).

L-serine is bound at residue Ala-313. Zn(2+) is bound at residue Cys-315. Residue Arg-344 participates in L-serine binding. ATP contacts are provided by residues 344-346 (RWE) and 355-356 (RV). 361 to 363 (RGE) contributes to the L-serine binding site. Residues Glu-363 and Cys-470 each contribute to the Zn(2+) site. Arg-477 contacts ATP.

It belongs to the class-II aminoacyl-tRNA synthetase family. Type-2 seryl-tRNA synthetase subfamily. As to quaternary structure, homodimer. Requires Zn(2+) as cofactor.

The protein resides in the cytoplasm. The catalysed reaction is tRNA(Ser) + L-serine + ATP = L-seryl-tRNA(Ser) + AMP + diphosphate + H(+). The enzyme catalyses tRNA(Sec) + L-serine + ATP = L-seryl-tRNA(Sec) + AMP + diphosphate + H(+). It participates in aminoacyl-tRNA biosynthesis; selenocysteinyl-tRNA(Sec) biosynthesis; L-seryl-tRNA(Sec) from L-serine and tRNA(Sec): step 1/1. In terms of biological role, catalyzes the attachment of serine to tRNA(Ser). Is also able to aminoacylate tRNA(Sec) with serine, to form the misacylated tRNA L-seryl-tRNA(Sec), which will be further converted into selenocysteinyl-tRNA(Sec). The polypeptide is Type-2 serine--tRNA ligase (Methanococcus maripaludis (strain C6 / ATCC BAA-1332)).